The sequence spans 583 residues: Probable phosphoglucomutase, cytoplasmic 1 (583 aa).

Residues R24 and S123 each contribute to the alpha-D-glucose 1,6-bisphosphate site. Catalysis depends on S123, which acts as the Phosphoserine intermediate. Mg(2+) is bound by residues S123, D299, D301, and D303. A Phosphoserine modification is found at S123. Alpha-D-glucose 1,6-bisphosphate contacts are provided by D303, R304, T367, E386, S388, and K399.

It belongs to the phosphohexose mutase family. In terms of assembly, monomer. Mg(2+) serves as cofactor.

Its subcellular location is the cytoplasm. The enzyme catalyses alpha-D-glucose 1-phosphate = alpha-D-glucose 6-phosphate. It catalyses the reaction O-phospho-L-seryl-[protein] + alpha-D-glucose 1-phosphate = alpha-D-glucose 1,6-bisphosphate + L-seryl-[protein]. The catalysed reaction is alpha-D-glucose 1,6-bisphosphate + L-seryl-[protein] = O-phospho-L-seryl-[protein] + alpha-D-glucose 6-phosphate. Catalyzes the reversible isomerization of alpha-D-glucose 1-phosphate to alpha-D-glucose 6-phosphate. The mechanism proceeds via the intermediate compound alpha-D-glucose 1,6-bisphosphate. This enzyme participates in both the breakdown and synthesis of glucose. The chain is Probable phosphoglucomutase, cytoplasmic 1 from Arabidopsis thaliana (Mouse-ear cress).